The chain runs to 591 residues: Solute carrier family 40 member 2, chloroplastic (591 aa).

The N-terminal 66 residues, 1–66, are a transit peptide targeting the chloroplast; sequence MGMVTATAAA…RCYITNVEVD (66 aa). A run of 11 helical transmembrane segments spans residues 159 to 179, 206 to 226, 242 to 262, 293 to 313, 318 to 338, 391 to 411, 419 to 439, 452 to 472, 482 to 502, 518 to 540, and 547 to 569; these read WPAALAILHPSLLPVAIVGFF, GLNAVQVATQLISAAMVIYAM, WFIALVAAGAIERLAGLALGV, LVCETVGASVFGLLLSKYHPV, IACGLMICSFPVLVVLGQLIN, VATVFLNFNVALAPGAIMTAL, PSIVGAFSGLCSIMGLVATFI, AGAAGLIVQASLLSVALVVYW, LLIFLAAIALSRLGHMSYDVV, LIGGMEVSISSLAELVMLGMAII, and FGFLAILSVSSVAGAAWMFCQWL.

The protein belongs to the ferroportin (FP) (TC 2.A.100) family. SLC40A subfamily.

It is found in the membrane. The protein resides in the plastid. Its subcellular location is the chloroplast envelope. Functionally, may be involved in iron transport and iron homeostasis. The chain is Solute carrier family 40 member 2, chloroplastic from Oryza sativa subsp. japonica (Rice).